We begin with the raw amino-acid sequence, 557 residues long: MARHGKGPKTNKKKLAPEKERFIQCCADITLELTDSLTSGTTREINLNGLITKYSKKYKLKQQPRLTDIINSIPDQYKKYLLPKLKAKPVRTASGIAVVAVMCKPHRCPHIAYTGNICVYCPGGPDSDFEYSTQSYTGYEPTSMRAIRARYDPYEQARGRVEQLKQLGHSIDKVEYVLMGGTFMSLPKEYREDFIVKLHNALSGFNGNDIDEAILYSQQSLTKCVGITIETRPDYCTQTHLDDMLKYGCTRLEIGVQSLYEDVARDTNRGHTVRSVCETFAVSKDAGYKVVSHMMPDLPNVGMERDIEQFKEYFENPDFRTDGLKIYPTLVIRGTGLYELWKTGRYKSYSANALVDLVARILALVPPWTRIYRVQRDIPMPLVTSGVDNGNLRELALARMKDLGTTCRDVRTREVGIQEVHHKVQPDQVELIRRDYYANGGWETFLSYEDPKKDILIGLLRLRKASKKYTYRKEFTSQRTSIVRELHVYGSVVPLHSRDPRKFQHQGFGTLLMEEAERIAKEEHGSEKISVISGVGVRNYYGKLGYELDGPYMSKRI.

Residues 91–381 (RTASGIAVVA…YRVQRDIPMP (291 aa)) form the Radical SAM core domain. 3 residues coordinate [4Fe-4S] cluster: Cys108, Cys118, and Cys121. Residue Lys173 participates in acetyl-CoA binding. The N-acetyltransferase domain maps to 405-557 (TTCRDVRTRE…LDGPYMSKRI (153 aa)). Lys453 is covalently cross-linked (Glycyl lysine isopeptide (Lys-Gly) (interchain with G-Cter in ubiquitin)). Acetyl-CoA-binding positions include 485-488 (ELHV), 508-510 (FGT), and Tyr541.

It belongs to the ELP3 family. As to quaternary structure, component of the elongator complex which consists of ELP1/IKI3, ELP2, ELP3, ELP4, ELP5/IKI1 and ELP6. The elongator complex is composed of two copies of the Elp123 subcomplex (composed of ELP1/IKI3, ELP2 and ELP3) and two copies of the Elp456 subcomplex (composed of ELP4, ELP5/IKI1 and ELP6). The Elp123 subcomplex forms a two-lobed scaffold, which binds the Elp456 subcomplex asymmetrically. In each lobe, ELP2 is tightly sandwiched between ELP1/IKI3 and ELP3. The Elp123 subcomplex binds tRNA through ELP1/IKI3 and ELP3 and can bind 2 tRNAs simultaneously. tRNA-binding induces conformational rearrangements which precisely position the targeted anticodon base in the active site. ELP3 interacts with KTI11/DPH3. ELP3 interacts with KTI12. The Elp456 subcomplex binds tRNA and has ATPase activity. [4Fe-4S] cluster serves as cofactor.

Its subcellular location is the cytoplasm. The protein localises to the nucleus. The enzyme catalyses uridine(34) in tRNA + acetyl-CoA + S-adenosyl-L-methionine + H2O = 5-(carboxymethyl)uridine(34) in tRNA + 5'-deoxyadenosine + L-methionine + CoA + 2 H(+). The protein operates within tRNA modification; 5-methoxycarbonylmethyl-2-thiouridine-tRNA biosynthesis. Functionally, catalytic tRNA acetyltransferase subunit of the elongator complex which is required for multiple tRNA modifications, including mcm5U (5-methoxycarbonylmethyl uridine), mcm5s2U (5-methoxycarbonylmethyl-2-thiouridine), and ncm5U (5-carbamoylmethyl uridine). In the elongator complex, acts as a tRNA uridine(34) acetyltransferase, which mediates formation of carboxymethyluridine in the wobble base at position 34 in tRNAs. The complex functions as a gamma-toxin target (TOT); disruption of the complex confers resistance to Kluyveromyces lactis toxin zymocin (pGKL1 killer toxin). May also be involved in sensitivity to Pichia inositovora toxin. Independently, ELP3 may be involved in polarized exocytosis. This is Elongator complex protein 3 from Saccharomyces cerevisiae (strain ATCC 204508 / S288c) (Baker's yeast).